The chain runs to 372 residues: 4-hydroxy-3-methylbut-2-en-1-yl diphosphate synthase (flavodoxin) (372 aa).

Residues Cys-270, Cys-273, Cys-305, and Glu-312 each contribute to the [4Fe-4S] cluster site.

Belongs to the IspG family. [4Fe-4S] cluster serves as cofactor.

It catalyses the reaction (2E)-4-hydroxy-3-methylbut-2-enyl diphosphate + oxidized [flavodoxin] + H2O + 2 H(+) = 2-C-methyl-D-erythritol 2,4-cyclic diphosphate + reduced [flavodoxin]. Its pathway is isoprenoid biosynthesis; isopentenyl diphosphate biosynthesis via DXP pathway; isopentenyl diphosphate from 1-deoxy-D-xylulose 5-phosphate: step 5/6. Functionally, converts 2C-methyl-D-erythritol 2,4-cyclodiphosphate (ME-2,4cPP) into 1-hydroxy-2-methyl-2-(E)-butenyl 4-diphosphate. This is 4-hydroxy-3-methylbut-2-en-1-yl diphosphate synthase (flavodoxin) from Salmonella choleraesuis (strain SC-B67).